The chain runs to 163 residues: Nucleotide-binding protein YajQ (163 aa).

The protein belongs to the YajQ family.

Functionally, nucleotide-binding protein. This Shigella flexneri protein is Nucleotide-binding protein YajQ.